The primary structure comprises 577 residues: Urease subunit alpha (577 aa).

Positions 136 to 577 (GGIDCHVHFI…LPMAQRYFLF (442 aa)) constitute a Urease domain. Positions 141, 143, and 224 each coordinate Ni(2+). K224 carries the N6-carboxylysine modification. H226 contributes to the substrate binding site. H253 and H279 together coordinate Ni(2+). H327 (proton donor) is an active-site residue. Residue D367 coordinates Ni(2+).

The protein belongs to the metallo-dependent hydrolases superfamily. Urease alpha subunit family. As to quaternary structure, heterotrimer of UreA (gamma), UreB (beta) and UreC (alpha) subunits. Three heterotrimers associate to form the active enzyme. Ni cation is required as a cofactor. Post-translationally, carboxylation allows a single lysine to coordinate two nickel ions.

It is found in the cytoplasm. It carries out the reaction urea + 2 H2O + H(+) = hydrogencarbonate + 2 NH4(+). It functions in the pathway nitrogen metabolism; urea degradation; CO(2) and NH(3) from urea (urease route): step 1/1. In Mycobacteroides abscessus (strain ATCC 19977 / DSM 44196 / CCUG 20993 / CIP 104536 / JCM 13569 / NCTC 13031 / TMC 1543 / L948) (Mycobacterium abscessus), this protein is Urease subunit alpha.